Here is a 451-residue protein sequence, read N- to C-terminus: uncharacterized protein (451 aa).

This sequence to ORF5 in pFZ1.

This is an uncharacterized protein from Methanothermobacter thermautotrophicus (Methanobacterium thermoformicicum).